We begin with the raw amino-acid sequence, 392 residues long: Na(+)/H(+) antiporter NhaA (392 aa).

A run of 11 helical transmembrane segments spans residues 17–37 (ILLI…LSAL), 59–79 (LILW…GLEV), 95–115 (IFPA…YLFF), 125–145 (GWAI…ALLG), 154–174 (VFLL…IALF), 179–199 (VALV…ILNW), 213–233 (FILW…GVIV), 254–274 (VLHP…NAGV), 290–310 (VGIA…FSWV), 328–348 (IFAV…IAGL), and 363–383 (LGIL…LNSV).

It belongs to the NhaA Na(+)/H(+) (TC 2.A.33) antiporter family.

It localises to the cell inner membrane. It catalyses the reaction Na(+)(in) + 2 H(+)(out) = Na(+)(out) + 2 H(+)(in). Its function is as follows. Na(+)/H(+) antiporter that extrudes sodium in exchange for external protons. The protein is Na(+)/H(+) antiporter NhaA of Proteus mirabilis (strain HI4320).